We begin with the raw amino-acid sequence, 234 residues long: Sugar fermentation stimulation protein homolog (234 aa).

This sequence belongs to the SfsA family.

This is Sugar fermentation stimulation protein homolog from Shewanella putrefaciens (strain CN-32 / ATCC BAA-453).